The sequence spans 361 residues: Histidinol-phosphate aminotransferase (361 aa).

K221 is modified (N6-(pyridoxal phosphate)lysine).

Belongs to the class-II pyridoxal-phosphate-dependent aminotransferase family. Histidinol-phosphate aminotransferase subfamily. It depends on pyridoxal 5'-phosphate as a cofactor.

The enzyme catalyses L-histidinol phosphate + 2-oxoglutarate = 3-(imidazol-4-yl)-2-oxopropyl phosphate + L-glutamate. It participates in amino-acid biosynthesis; L-histidine biosynthesis; L-histidine from 5-phospho-alpha-D-ribose 1-diphosphate: step 7/9. The sequence is that of Histidinol-phosphate aminotransferase from Methanocella arvoryzae (strain DSM 22066 / NBRC 105507 / MRE50).